The following is a 176-amino-acid chain: Ribosome maturation factor RimM (176 aa).

Residues 96–176 (PADEFYWRDL…QILVDWDPDF (81 aa)) form the PRC barrel domain.

It belongs to the RimM family. As to quaternary structure, binds ribosomal protein uS19.

The protein resides in the cytoplasm. An accessory protein needed during the final step in the assembly of 30S ribosomal subunit, possibly for assembly of the head region. Essential for efficient processing of 16S rRNA. May be needed both before and after RbfA during the maturation of 16S rRNA. It has affinity for free ribosomal 30S subunits but not for 70S ribosomes. In Shewanella baltica (strain OS223), this protein is Ribosome maturation factor RimM.